We begin with the raw amino-acid sequence, 105 residues long: Large ribosomal subunit protein bL21 (105 aa).

The protein belongs to the bacterial ribosomal protein bL21 family. As to quaternary structure, part of the 50S ribosomal subunit. Contacts protein L20.

Functionally, this protein binds to 23S rRNA in the presence of protein L20. The sequence is that of Large ribosomal subunit protein bL21 from Rickettsia canadensis (strain McKiel).